The sequence spans 109 residues: Large ribosomal subunit protein uL22 (109 aa).

Belongs to the universal ribosomal protein uL22 family. Part of the 50S ribosomal subunit.

Its function is as follows. This protein binds specifically to 23S rRNA; its binding is stimulated by other ribosomal proteins, e.g. L4, L17, and L20. It is important during the early stages of 50S assembly. It makes multiple contacts with different domains of the 23S rRNA in the assembled 50S subunit and ribosome. The globular domain of the protein is located near the polypeptide exit tunnel on the outside of the subunit, while an extended beta-hairpin is found that lines the wall of the exit tunnel in the center of the 70S ribosome. The sequence is that of Large ribosomal subunit protein uL22 from Polynucleobacter asymbioticus (strain DSM 18221 / CIP 109841 / QLW-P1DMWA-1) (Polynucleobacter necessarius subsp. asymbioticus).